The following is a 318-amino-acid chain: Probable cell division protein WhiA (318 aa).

The segment at residues 281–314 is a DNA-binding region (H-T-H motif); it reads SLKELGEMLSPPVGKSGVNHRLRRIEKIAEELSK.

It belongs to the WhiA family.

Involved in cell division and chromosome segregation. In Clostridium tetani (strain Massachusetts / E88), this protein is Probable cell division protein WhiA.